We begin with the raw amino-acid sequence, 317 residues long: ATP synthase gamma chain (317 aa).

Belongs to the ATPase gamma chain family. As to quaternary structure, F-type ATPases have 2 components, CF(1) - the catalytic core - and CF(0) - the membrane proton channel. CF(1) has five subunits: alpha(3), beta(3), gamma(1), delta(1), epsilon(1). CF(0) has three main subunits: a, b and c.

It localises to the cellular thylakoid membrane. Functionally, produces ATP from ADP in the presence of a proton gradient across the membrane. The gamma chain is believed to be important in regulating ATPase activity and the flow of protons through the CF(0) complex. This is ATP synthase gamma chain from Synechococcus sp. (strain CC9902).